We begin with the raw amino-acid sequence, 180 residues long: Major urinary protein 17 (180 aa).

The first 18 residues, 1 to 18 (MKMLLLLCLGLTLVCVHA), serve as a signal peptide directing secretion. Residues C82 and C175 are joined by a disulfide bond.

Belongs to the calycin superfamily. Lipocalin family. Because of their involvement in the coordination of social behavior, Mup proteins are thought to exhibit variable expression depending upon gender, age and status of the studied individuals. Expression may also be strain-specific: in strains C57BL/6J and 129S7, transcriptional support is lacking for Mup17.

The protein resides in the secreted. In terms of biological role, major urinary proteins (Mups) bind pheromones, thus stabilize them and allow slow release into the air from urine marks. May protect pheromones from oxidation. May also act as pheromones themselves. In this context, they play a role in the regulation of social behaviors, such as aggression, mating, pup-suckling, territory establishment and dominance. This is Major urinary protein 17 (Mup17) from Mus musculus (Mouse).